A 1160-amino-acid chain; its full sequence is Nck-associated protein 1 homolog (1160 aa).

It belongs to the HEM-1/HEM-2 family. In terms of assembly, part of a Scar/WAVE complex containing brk1, scrA, abiA, pirA and napA.

In terms of biological role, involved in regulation of actin and microtubule organization. Involved in cell adhesion. The sequence is that of Nck-associated protein 1 homolog (napA) from Dictyostelium discoideum (Social amoeba).